The chain runs to 391 residues: Transforming growth factor beta-1 proprotein (391 aa).

The first 18 residues, 1-18 (MDPSPLLALLLLLGAARA), serve as a signal peptide directing secretion. The straightjacket domain stretch occupies residues 19-63 (LSTCQRLDLEAAKKKRIEAVRGQILSKLRLTAPPPASETPPRPLP). An arm domain region spans residues 64 to 270 (DDVRALYNST…ALPAERANEL (207 aa)). N-linked (GlcNAc...) asparagine glycans are attached at residues Asn-71, Asn-126, and Asn-171. The segment at 221 to 249 (EMGPGHADEMRISIEGFEQQRGDMQSIAK) is bowtie tail. Residues 241–243 (RGD) carry the Cell attachment site motif. Disulfide bonds link Cys-284/Cys-295, Cys-294/Cys-357, Cys-323/Cys-388, and Cys-327/Cys-390.

The protein belongs to the TGF-beta family. Latency-associated peptide: Homodimer; disulfide-linked. Latency-associated peptide: Interacts with Transforming growth factor beta-1 (TGF-beta-1) chain; interaction is non-covalent and maintains (TGF-beta-1) in a latent state; each Latency-associated peptide (LAP) monomer interacts with TGF-beta-1 in the other monomer. Transforming growth factor beta-1: Homodimer; disulfide-linked. Transforming growth factor beta-1: Interacts with TGF-beta receptors (TGFBR1 and TGFBR2), leading to signal transduction. Post-translationally, transforming growth factor beta-1 proprotein: The precursor proprotein is cleaved in the Golgi apparatus to form Transforming growth factor beta-1 (TGF-beta-1) and Latency-associated peptide (LAP) chains, which remain non-covalently linked, rendering TGF-beta-1 inactive.

It localises to the secreted. The protein localises to the extracellular space. The protein resides in the extracellular matrix. Functionally, transforming growth factor beta-1 proprotein: Precursor of the Latency-associated peptide (LAP) and Transforming growth factor beta-1 (TGF-beta-1) chains, which constitute the regulatory and active subunit of TGF-beta-1, respectively. Its function is as follows. Required to maintain the Transforming growth factor beta-1 (TGF-beta-1) chain in a latent state during storage in extracellular matrix. Associates non-covalently with TGF-beta-1 and regulates its activation via interaction with 'milieu molecules', such as LTBP1, LRRC32/GARP and LRRC33/NRROS, that control activation of TGF-beta-1. Interaction with integrins (ITGAV:ITGB6 or ITGAV:ITGB8) results in distortion of the Latency-associated peptide chain and subsequent release of the active TGF-beta-1. In terms of biological role, transforming growth factor beta-1: Multifunctional protein that regulates the growth and differentiation of various cell types and is involved in various processes, such as normal development, immune function, microglia function and responses to neurodegeneration. Activation into mature form follows different steps: following cleavage of the proprotein in the Golgi apparatus, Latency-associated peptide (LAP) and Transforming growth factor beta-1 (TGF-beta-1) chains remain non-covalently linked rendering TGF-beta-1 inactive during storage in extracellular matrix. At the same time, LAP chain interacts with 'milieu molecules', such as LTBP1, LRRC32/GARP and LRRC33/NRROS that control activation of TGF-beta-1 and maintain it in a latent state during storage in extracellular milieus. TGF-beta-1 is released from LAP by integrins (ITGAV:ITGB6 or ITGAV:ITGB8): integrin-binding to LAP stabilizes an alternative conformation of the LAP bowtie tail and results in distortion of the LAP chain and subsequent release of the active TGF-beta-1. Once activated following release of LAP, TGF-beta-1 acts by binding to TGF-beta receptors (TGFBR1 and TGFBR2), which transduce signal. While expressed by many cells types, TGF-beta-1 only has a very localized range of action within cell environment thanks to fine regulation of its activation by Latency-associated peptide chain (LAP) and 'milieu molecules'. Plays an important role in bone remodeling: acts as a potent stimulator of osteoblastic bone formation. Can promote either T-helper 17 cells (Th17) or regulatory T-cells (Treg) lineage differentiation in a concentration-dependent manner. Can induce epithelial-to-mesenchymal transition (EMT) and cell migration in various cell types. This is Transforming growth factor beta-1 proprotein (TGFB1) from Gallus gallus (Chicken).